Reading from the N-terminus, the 495-residue chain is Ribosomal protein uS12 methylthiotransferase RimO (495 aa).

Residues R5 to N121 enclose the MTTase N-terminal domain. C14, C50, and C84 together coordinate [4Fe-4S] cluster. Positions Q145–R183 are disordered. In terms of domain architecture, Radical SAM core spans L184 to R415. The [4Fe-4S] cluster site is built by C198, C202, and C205. The 68-residue stretch at E417–P484 folds into the TRAM domain.

Belongs to the methylthiotransferase family. RimO subfamily. Requires [4Fe-4S] cluster as cofactor.

It localises to the cytoplasm. The enzyme catalyses L-aspartate(89)-[ribosomal protein uS12]-hydrogen + (sulfur carrier)-SH + AH2 + 2 S-adenosyl-L-methionine = 3-methylsulfanyl-L-aspartate(89)-[ribosomal protein uS12]-hydrogen + (sulfur carrier)-H + 5'-deoxyadenosine + L-methionine + A + S-adenosyl-L-homocysteine + 2 H(+). Catalyzes the methylthiolation of an aspartic acid residue of ribosomal protein uS12. This Streptomyces avermitilis (strain ATCC 31267 / DSM 46492 / JCM 5070 / NBRC 14893 / NCIMB 12804 / NRRL 8165 / MA-4680) protein is Ribosomal protein uS12 methylthiotransferase RimO.